Consider the following 88-residue polypeptide: Small ribosomal subunit protein uS19 (88 aa).

Belongs to the universal ribosomal protein uS19 family.

In terms of biological role, protein S19 forms a complex with S13 that binds strongly to the 16S ribosomal RNA. This is Small ribosomal subunit protein uS19 from Ureaplasma parvum serovar 3 (strain ATCC 27815 / 27 / NCTC 11736).